We begin with the raw amino-acid sequence, 319 residues long: Cytochrome f (319 aa).

The first 35 residues, 1 to 35, serve as a signal peptide directing secretion; it reads MQNKDACKSLSSWVSLSISLLVLTVPLIWPYNSTA. Heme-binding residues include Phe36, Cys56, Cys59, and His60. The chain crosses the membrane as a helical span at residues 285 to 305; it reads IQGLLVFFASVILAQIFLVLK.

It belongs to the cytochrome f family. In terms of assembly, the 4 large subunits of the cytochrome b6-f complex are cytochrome b6, subunit IV (17 kDa polypeptide, petD), cytochrome f and the Rieske protein, while the 4 small subunits are PetG, PetL, PetM and PetN. The complex functions as a dimer. It depends on heme as a cofactor.

It localises to the plastid. The protein localises to the chloroplast thylakoid membrane. Its function is as follows. Component of the cytochrome b6-f complex, which mediates electron transfer between photosystem II (PSII) and photosystem I (PSI), cyclic electron flow around PSI, and state transitions. The chain is Cytochrome f from Staurastrum punctulatum (Green alga).